The primary structure comprises 385 residues: Fe-S cluster assembly protein DRE2 (385 aa).

An N-terminal SAM-like domain region spans residues 1-177 (MTSSINILLL…KKLNKNDMTI (177 aa)). The tract at residues 178–240 (NVPQEIDNIT…NDLLKYNNHN (63 aa)) is linker. Residues 200–226 (YFSSDDENSSDGSLSDNANEEEEDDDE) form a disordered region. The segment covering 217–226 (ANEEEEDDDE) has biased composition (acidic residues). Positions 261, 275, 278, and 280 each coordinate [2Fe-2S] cluster. Positions 261–280 (CELSLNGGKKRKKACKDCTC) are fe-S binding site A. [4Fe-4S] cluster is bound by residues C348, C351, C359, and C362. 2 short sequence motifs (cx2C motif) span residues 348–351 (CGSC) and 359–362 (CDGC). Residues 348–362 (CGSCALGDAFRCDGC) form a fe-S binding site B region.

It belongs to the anamorsin family. Monomer. Interacts with TAH18. Interacts with MIA40. The cofactor is [2Fe-2S] cluster. [4Fe-4S] cluster is required as a cofactor.

The protein localises to the cytoplasm. It localises to the mitochondrion intermembrane space. In terms of biological role, component of the cytosolic iron-sulfur (Fe-S) protein assembly (CIA) machinery required for the maturation of extramitochondrial Fe-S proteins. Part of an electron transfer chain functioning in an early step of cytosolic Fe-S biogenesis, facilitating the de novo assembly of a [4Fe-4S] cluster on the scaffold complex CFD1-NBP35. Electrons are transferred to DRE2 from NADPH via the FAD- and FMN-containing protein TAH18. TAH18-DRE2 are also required for the assembly of the diferric tyrosyl radical cofactor of ribonucleotide reductase (RNR), probably by providing electrons for reduction during radical cofactor maturation in the catalytic small subunit RNR2. The polypeptide is Fe-S cluster assembly protein DRE2 (Candida dubliniensis (strain CD36 / ATCC MYA-646 / CBS 7987 / NCPF 3949 / NRRL Y-17841) (Yeast)).